Here is a 132-residue protein sequence, read N- to C-terminus: Small ribosomal subunit protein uS8 (132 aa).

It belongs to the universal ribosomal protein uS8 family. As to quaternary structure, part of the 30S ribosomal subunit. Contacts proteins S5 and S12.

Functionally, one of the primary rRNA binding proteins, it binds directly to 16S rRNA central domain where it helps coordinate assembly of the platform of the 30S subunit. The sequence is that of Small ribosomal subunit protein uS8 from Tropheryma whipplei (strain Twist) (Whipple's bacillus).